A 512-amino-acid chain; its full sequence is GMP synthase [glutamine-hydrolyzing] (512 aa).

In terms of domain architecture, Glutamine amidotransferase type-1 spans 7–197 (TIIVLDFGSQ…VFGVCGCSEG (191 aa)). The active-site Nucleophile is Cys84. Active-site residues include His171 and Glu173. Residues 198-387 (WNMENFIEVE…LGIPDEIVWR (190 aa)) enclose the GMPS ATP-PPase domain. 225–231 (SGGVDSS) contributes to the ATP binding site.

As to quaternary structure, homodimer.

It catalyses the reaction XMP + L-glutamine + ATP + H2O = GMP + L-glutamate + AMP + diphosphate + 2 H(+). It functions in the pathway purine metabolism; GMP biosynthesis; GMP from XMP (L-Gln route): step 1/1. Its function is as follows. Catalyzes the synthesis of GMP from XMP. The protein is GMP synthase [glutamine-hydrolyzing] of Bacillus cytotoxicus (strain DSM 22905 / CIP 110041 / 391-98 / NVH 391-98).